A 429-amino-acid polypeptide reads, in one-letter code: Glutamate-1-semialdehyde 2,1-aminomutase (429 aa).

Position 265 is an N6-(pyridoxal phosphate)lysine (Lys-265).

It belongs to the class-III pyridoxal-phosphate-dependent aminotransferase family. HemL subfamily. As to quaternary structure, homodimer. Requires pyridoxal 5'-phosphate as cofactor.

Its subcellular location is the cytoplasm. The catalysed reaction is (S)-4-amino-5-oxopentanoate = 5-aminolevulinate. It participates in porphyrin-containing compound metabolism; protoporphyrin-IX biosynthesis; 5-aminolevulinate from L-glutamyl-tRNA(Glu): step 2/2. The sequence is that of Glutamate-1-semialdehyde 2,1-aminomutase from Shewanella piezotolerans (strain WP3 / JCM 13877).